Here is a 486-residue protein sequence, read N- to C-terminus: Membrane-bound lytic murein transglycosylase F (486 aa).

Positions 1–26 (MFSPMALRPRCAKWLIVTGLFLMLGA) are cleaved as a signal peptide. Residues 27–267 (CVEKPSTLER…RLKDRYYGHV (241 aa)) form a non-LT domain region. An LT domain region spans residues 268–486 (DVLGYVGAYT…TKPPEENPPL (219 aa)). Glutamate 314 is an active-site residue. A disordered region spans residues 464–486 (VAEGNLHVPGVNKTKPPEENPPL).

The protein in the N-terminal section; belongs to the bacterial solute-binding protein 3 family. It in the C-terminal section; belongs to the transglycosylase Slt family.

Its subcellular location is the cell outer membrane. The enzyme catalyses Exolytic cleavage of the (1-&gt;4)-beta-glycosidic linkage between N-acetylmuramic acid (MurNAc) and N-acetylglucosamine (GlcNAc) residues in peptidoglycan, from either the reducing or the non-reducing ends of the peptidoglycan chains, with concomitant formation of a 1,6-anhydrobond in the MurNAc residue.. In terms of biological role, murein-degrading enzyme that degrades murein glycan strands and insoluble, high-molecular weight murein sacculi, with the concomitant formation of a 1,6-anhydromuramoyl product. Lytic transglycosylases (LTs) play an integral role in the metabolism of the peptidoglycan (PG) sacculus. Their lytic action creates space within the PG sacculus to allow for its expansion as well as for the insertion of various structures such as secretion systems and flagella. In Pseudomonas fluorescens (strain ATCC BAA-477 / NRRL B-23932 / Pf-5), this protein is Membrane-bound lytic murein transglycosylase F.